Here is a 1172-residue protein sequence, read N- to C-terminus: DNA-directed RNA polymerase subunit beta (1172 aa).

This sequence belongs to the RNA polymerase beta chain family. The RNAP catalytic core consists of 2 alpha, 1 beta, 1 beta' and 1 omega subunit. When a sigma factor is associated with the core the holoenzyme is formed, which can initiate transcription.

It catalyses the reaction RNA(n) + a ribonucleoside 5'-triphosphate = RNA(n+1) + diphosphate. Its function is as follows. DNA-dependent RNA polymerase catalyzes the transcription of DNA into RNA using the four ribonucleoside triphosphates as substrates. This Mycobacterium sp. (strain KMS) protein is DNA-directed RNA polymerase subunit beta.